The following is a 262-amino-acid chain: LysM and putative peptidoglycan-binding domain-containing protein 3 (262 aa).

Residues 1–218 (MSGRIPNHGY…PYHGADWSLG (218 aa)) are Extracellular-facing. In terms of domain architecture, LysM spans 70–114 (ISRDICEGDTLNSIALQYCCTVADLKRANNFLNEQDFFALRTIKI). The helical transmembrane segment at 219 to 239 (WWTAVAIMVFVGIITPLFYFL) threads the bilayer. Residues 240 to 262 (YYEVLMKVNTSHTLNSIEKSGPS) lie on the Cytoplasmic side of the membrane.

It localises to the cell membrane. The protein localises to the golgi apparatus. Its function is as follows. Essential for Golgi structural integrity. This chain is LysM and putative peptidoglycan-binding domain-containing protein 3 (lysmd3), found in Xenopus tropicalis (Western clawed frog).